A 409-amino-acid chain; its full sequence is tRNA(Met) cytidine acetate ligase (409 aa).

ATP-binding positions include 7 to 20 (VVEY…HLHH), Gly102, Asn169, and Arg194.

Belongs to the TmcAL family.

The protein localises to the cytoplasm. The enzyme catalyses cytidine(34) in elongator tRNA(Met) + acetate + ATP = N(4)-acetylcytidine(34) in elongator tRNA(Met) + AMP + diphosphate. In terms of biological role, catalyzes the formation of N(4)-acetylcytidine (ac(4)C) at the wobble position of elongator tRNA(Met), using acetate and ATP as substrates. First activates an acetate ion to form acetyladenylate (Ac-AMP) and then transfers the acetyl group to tRNA to form ac(4)C34. The sequence is that of tRNA(Met) cytidine acetate ligase from Clostridium botulinum (strain Loch Maree / Type A3).